The following is an 817-amino-acid chain: Leucine--tRNA ligase (817 aa).

Positions Pro42–His52 match the 'HIGH' region motif. The 'KMSKS' region motif lies at Lys576 to Ser580. Lys579 contacts ATP.

Belongs to the class-I aminoacyl-tRNA synthetase family.

It is found in the cytoplasm. The catalysed reaction is tRNA(Leu) + L-leucine + ATP = L-leucyl-tRNA(Leu) + AMP + diphosphate. This Thioalkalivibrio sulfidiphilus (strain HL-EbGR7) protein is Leucine--tRNA ligase.